Consider the following 692-residue polypeptide: DNA topoisomerase 4 subunit B (692 aa).

ATP-binding positions include Tyr53, Asn93, Asp120, 162-168 (GLHGVGI), and Lys393. One can recognise a Toprim domain in the interval 473–587 (AELFIVEGDS…AGHLYLAVPP (115 aa)). Residues Glu479, Asp552, and Asp554 each contribute to the Mg(2+) site.

This sequence belongs to the type II topoisomerase family. ParE type 1 subfamily. In terms of assembly, heterotetramer composed of ParC and ParE. The cofactor is Mg(2+). It depends on Mn(2+) as a cofactor. Ca(2+) is required as a cofactor.

The enzyme catalyses ATP-dependent breakage, passage and rejoining of double-stranded DNA.. In terms of biological role, topoisomerase IV is essential for chromosome segregation. It relaxes supercoiled DNA. Performs the decatenation events required during the replication of a circular DNA molecule. The protein is DNA topoisomerase 4 subunit B of Bartonella bacilliformis (strain ATCC 35685 / KC583 / Herrer 020/F12,63).